Reading from the N-terminus, the 310-residue chain is Homoserine kinase (310 aa).

Residue 91–101 participates in ATP binding; that stretch reads PIGSGLGSSAC.

This sequence belongs to the GHMP kinase family. Homoserine kinase subfamily.

It localises to the cytoplasm. It catalyses the reaction L-homoserine + ATP = O-phospho-L-homoserine + ADP + H(+). Its pathway is amino-acid biosynthesis; L-threonine biosynthesis; L-threonine from L-aspartate: step 4/5. Functionally, catalyzes the ATP-dependent phosphorylation of L-homoserine to L-homoserine phosphate. The chain is Homoserine kinase from Escherichia coli O17:K52:H18 (strain UMN026 / ExPEC).